The chain runs to 466 residues: Fumarate hydratase class II (466 aa).

Residues 99–101 (SGT), 129–132 (HPND), 139–141 (SSN), and Thr187 each bind substrate. His188 functions as the Proton donor/acceptor in the catalytic mechanism. Residue Ser318 is part of the active site. Substrate-binding positions include Ser319 and 324-326 (KVN).

Belongs to the class-II fumarase/aspartase family. Fumarase subfamily. In terms of assembly, homotetramer.

The protein resides in the cytoplasm. It carries out the reaction (S)-malate = fumarate + H2O. It participates in carbohydrate metabolism; tricarboxylic acid cycle; (S)-malate from fumarate: step 1/1. In terms of biological role, involved in the TCA cycle. Catalyzes the stereospecific interconversion of fumarate to L-malate. The polypeptide is Fumarate hydratase class II (Thermus thermophilus (strain ATCC BAA-163 / DSM 7039 / HB27)).